Here is a 374-residue protein sequence, read N- to C-terminus: Very late expression factor 1 (374 aa).

The 181-residue stretch at 169–349 (AIDTILNFID…NFDESSSDEE (181 aa)) folds into the Tyr recombinase domain. Residues Arg-210, Lys-239, Arg-303, and His-326 contribute to the active site. Residues 328–374 (SPASTKPYLNKYNFDESSSDEESGGNNRDSSTGSSANSSSLYYQTGD) form a disordered region. Tyr-335 acts as the O-(3'-phospho-DNA)-tyrosine intermediate in catalysis. Low complexity predominate over residues 357–367 (SSTGSSANSSS).

The protein belongs to the 'phage' integrase family.

Functionally, involved in very late gene activation. The sequence is that of Very late expression factor 1 (VLF-1) from Orgyia pseudotsugata (Douglas-fir tussock moth).